We begin with the raw amino-acid sequence, 266 residues long: Transcription regulator FGM4 (266 aa).

The segment at 17 to 36 (KTQNRLAKRKSRIHAGKQQG) is disordered. A compositionally biased stretch (basic residues) spans 18–31 (TQNRLAKRKSRIHA). 2 ANK repeats span residues 183-212 (KPGS…NVNE) and 216-245 (AGYS…DWSY).

The protein resides in the nucleus. Transcription regulator; part of the Fg3_54/C64 gene cluster that mediates the biosynthesis of the octapeptide fusaoctaxin A, a virulence factor that is required for cell-to-cell invasiveness of plant host. Positively regulates the expression the Fg3_54/C64 gene cluster. The chain is Transcription regulator FGM4 from Gibberella zeae (strain ATCC MYA-4620 / CBS 123657 / FGSC 9075 / NRRL 31084 / PH-1) (Wheat head blight fungus).